Consider the following 505-residue polypeptide: Lysine--tRNA ligase (505 aa).

Residues E409 and E416 each contribute to the Mg(2+) site.

This sequence belongs to the class-II aminoacyl-tRNA synthetase family. In terms of assembly, homodimer. The cofactor is Mg(2+).

Its subcellular location is the cytoplasm. The enzyme catalyses tRNA(Lys) + L-lysine + ATP = L-lysyl-tRNA(Lys) + AMP + diphosphate. The sequence is that of Lysine--tRNA ligase from Latilactobacillus sakei subsp. sakei (strain 23K) (Lactobacillus sakei subsp. sakei).